The sequence spans 184 residues: GTP cyclohydrolase 1 (184 aa).

C75, H78, and C146 together coordinate Zn(2+).

It belongs to the GTP cyclohydrolase I family. As to quaternary structure, toroid-shaped homodecamer, composed of two pentamers of five dimers.

It catalyses the reaction GTP + H2O = 7,8-dihydroneopterin 3'-triphosphate + formate + H(+). It participates in cofactor biosynthesis; 7,8-dihydroneopterin triphosphate biosynthesis; 7,8-dihydroneopterin triphosphate from GTP: step 1/1. This chain is GTP cyclohydrolase 1, found in Pseudoalteromonas translucida (strain TAC 125).